Consider the following 256-residue polypeptide: 3-methyl-2-oxobutanoate hydroxymethyltransferase (256 aa).

Residues Asp42 and Asp86 each contribute to the Mg(2+) site. 3-methyl-2-oxobutanoate contacts are provided by residues 42–43, Asp86, and Lys116; that span reads DS. Residue Glu118 coordinates Mg(2+). Catalysis depends on Glu185, which acts as the Proton acceptor.

This sequence belongs to the PanB family. As to quaternary structure, homodecamer; pentamer of dimers. It depends on Mg(2+) as a cofactor.

The protein localises to the cytoplasm. It catalyses the reaction 3-methyl-2-oxobutanoate + (6R)-5,10-methylene-5,6,7,8-tetrahydrofolate + H2O = 2-dehydropantoate + (6S)-5,6,7,8-tetrahydrofolate. It participates in cofactor biosynthesis; (R)-pantothenate biosynthesis; (R)-pantoate from 3-methyl-2-oxobutanoate: step 1/2. Functionally, catalyzes the reversible reaction in which hydroxymethyl group from 5,10-methylenetetrahydrofolate is transferred onto alpha-ketoisovalerate to form ketopantoate. The sequence is that of 3-methyl-2-oxobutanoate hydroxymethyltransferase from Prochlorococcus marinus (strain SARG / CCMP1375 / SS120).